A 556-amino-acid polypeptide reads, in one-letter code: MARNVLESSLLGAGFSIIFQILCRILTFGINAYIVRHVGREVLGIMNVRLLLLESTLLFLSREAINRAALSANAQQGDRCSWAQLINQMWLTVPICAVLCAPCLYIWLNWLSAVDAIYASQYEFACYAVAFSCVLELMAESAVFVAQVFCFVKLKILLNTLHILVRSAIFLWIVTGDRSAAINAFAIAQLSSAVTIVLGQYGFFYFYLKGFKDFVTQQAKKKPVAPKAWQVSLYEHMDDFPFKQLSDFLPGVMFNPNGKHFNRELQTLTLSFVKQGVLKQILTEGEKYVMSVSPVLSFGEQATYDVVNNLGSMAARFIFRPIEDSSYFYFTQTLSRDIKLAKQPQERVRQASSVLNNLLLGVSSIGLIAFTFGQSYSYPVLLLYGGPDFVAGGLPQSLLQWHCLAIYLLAVNGISEGYMFATNTSRDIDKYNYLMAIFSVSFLVLSYILTGIFGPVGFIFANCINMLSRILYSTYYIRHQYRPLSLDPLLGLWPGKLFGCTLFLAGIVCYWYQSSDLATHLGVGVLAGLACLLSWALAHRDLVRLAWRYGRRIKIE.

Helical transmembrane passes span 10 to 30, 41 to 61, 91 to 111, 129 to 149, 156 to 176, 184 to 204, 353 to 373, 389 to 409, 440 to 460, 461 to 477, 489 to 509, and 517 to 537; these read LLGA…TFGI, EVLG…LFLS, LTVP…LNWL, VAFS…AQVF, ILLN…IVTG, AFAI…YGFF, SVLN…FTFG, FVAG…IYLL, VSFL…GFIF, ANCI…TYYI, LLGL…GIVC, and LATH…SWAL.

The protein belongs to the RFT1 family.

The protein resides in the endoplasmic reticulum membrane. Its pathway is protein modification; protein glycosylation. Intramembrane glycolipid transporter that operates in the biosynthetic pathway of dolichol-linked oligosaccharides, the glycan precursors employed in protein asparagine (N)-glycosylation. The sequential addition of sugars to dolichol pyrophosphate produces dolichol-linked oligosaccharides containing fourteen sugars, including two GlcNAcs, nine mannoses and three glucoses. Once assembled, the oligosaccharide is transferred from the lipid to nascent proteins by oligosaccharyltransferases. The assembly of dolichol-linked oligosaccharides begins on the cytosolic side of the endoplasmic reticulum membrane and finishes in its lumen. RFT1 could mediate the translocation of the cytosolically oriented intermediate DolPP-GlcNAc2Man5, produced by ALG11, into the ER lumen where dolichol-linked oligosaccharides assembly continues. However, the intramembrane lipid transporter activity could not be confirmed in vitro. This chain is Man(5)GlcNAc(2)-PP-dolichol translocation protein RFT1, found in Drosophila melanogaster (Fruit fly).